The following is a 636-amino-acid chain: 1-phosphatidylinositol 4,5-bisphosphate phosphodiesterase zeta-1 (636 aa).

The EF-hand domain occupies 35–70; the sequence is CNTIHVKCIFKDNDRLKQGRITIEEFRTIYRIIAHR. The region spanning 155 to 299 is the PI-PLC X-box domain; that stretch reads QDMTHPLSDY…LKFKILVRNK (145 aa). Active-site residues include histidine 170 and histidine 215. Residues 311–338 form a disordered region; the sequence is KGFDKHGQVQECEEEEEAEQEEEENEVR. Positions 318–345 form a coiled coil; the sequence is QVQECEEEEEAEQEEEENEVRDSEILDI. Positions 321–336 are enriched in acidic residues; it reads ECEEEEEAEQEEEENE. Residues 375–491 enclose the PI-PLC Y-box domain; that stretch reads LSDLVIYTKV…GYILKPHFLR (117 aa). The 127-residue stretch at 491-617 folds into the C2 domain; sequence RDGKSIFNPN…KGYRRVPLFS (127 aa).

Interacts via its C2 domain with PtdIns(3)P and, to a lesser extent, PtdIns(5)P in vitro. Requires Ca(2+) as cofactor. As to expression, expressed specifically in testis.

The protein resides in the nucleus. Its subcellular location is the cytoplasm. It localises to the perinuclear region. It carries out the reaction a 1,2-diacyl-sn-glycero-3-phospho-(1D-myo-inositol-4,5-bisphosphate) + H2O = 1D-myo-inositol 1,4,5-trisphosphate + a 1,2-diacyl-sn-glycerol + H(+). Functionally, the production of the second messenger molecules diacylglycerol (DAG) and inositol 1,4,5-trisphosphate (IP3) is mediated by activated phosphatidylinositol-specific phospholipase C enzymes. In vitro, hydrolyzes PtdIns(4,5)P2 in a Ca(2+)-dependent manner. Triggers intracellular Ca(2+) oscillations in oocytes solely during M phase and is involved in inducing oocyte activation and initiating embryonic development up to the blastocyst stage. Is therefore a strong candidate for the egg-activating soluble sperm factor that is transferred from the sperm into the egg cytoplasm following gamete membrane fusion. May exert an inhibitory effect on phospholipase-C-coupled processes that depend on calcium ions and protein kinase C, including CFTR trafficking and function. The chain is 1-phosphatidylinositol 4,5-bisphosphate phosphodiesterase zeta-1 from Sus scrofa (Pig).